Reading from the N-terminus, the 2809-residue chain is Fibrillin-3 (2809 aa).

Positions M1–G31 are cleaved as a signal peptide. A propeptide spanning residues R32–R48 is cleaved from the precursor. An EGF-like 1 domain is found at G147 to E179. Disulfide bonds link C151–C161, C155–C167, and C169–C178. The region spanning G185–I237 is the TB 1 domain. One can recognise an EGF-like 2; calcium-binding domain in the interval D247–E288. 3 cysteine pairs are disulfide-bonded: C251-C263, C258-C272, and C274-C287. A TB 2 domain is found at G293–C346. Residue N406 is glycosylated (N-linked (GlcNAc...) asparagine). Residues T408 to I448 form the EGF-like 3 domain. Cystine bridges form between C412/C424, C419/C433, C435/C447, C453/C463, C458/C472, C474/C487, C493/C505, C500/C514, C516/C529, C535/C546, C541/C555, C557/C570, C576/C587, C582/C596, and C598/C611. The 40-residue stretch at D449 to V488 folds into the EGF-like 4; calcium-binding domain. The EGF-like 5; calcium-binding domain maps to D489 to V530. An EGF-like 6; calcium-binding domain is found at D531–M571. One can recognise an EGF-like 7; calcium-binding domain in the interval D572–V612. A TB 3 domain is found at S618 to C670. The EGF-like 8; calcium-binding domain occupies D682–T723. 9 disulfide bridges follow: C686–C698, C693–C707, C709–C722, C728–C740, C735–C749, C751–C764, C770–C780, C775–C789, and C791–C804. An EGF-like 9; calcium-binding domain is found at D724–K765. Residues D766–L805 enclose the EGF-like 10; calcium-binding domain. The region spanning G810–R861 is the TB 4 domain. Residues D869–V910 enclose the EGF-like 11; calcium-binding domain. Cystine bridges form between C873/C885, C880/C894, and C896/C909. Positions E915–C966 constitute a TB 5 domain. Residues D986–T1027 form the EGF-like 12; calcium-binding domain. Intrachain disulfides connect C990-C1002, C997-C1011, C1013-C1026, C1032-C1044, C1039-C1053, C1055-C1069, C1075-C1087, C1082-C1096, C1098-C1111, C1117-C1129, C1124-C1138, C1140-C1153, C1159-C1170, C1166-C1179, C1181-C1194, C1200-C1212, C1207-C1221, C1223-C1236, C1242-C1254, C1249-C1263, C1265-C1278, C1284-C1297, C1291-C1306, C1308-C1319, C1325-C1338, C1332-C1347, C1349-C1360, C1366-C1378, C1373-C1387, C1389-C1402, C1408-C1419, C1414-C1428, C1430-C1443, C1449-C1460, C1455-C1469, and C1471-C1484. N-linked (GlcNAc...) asparagine glycosylation occurs at N1025. The EGF-like 13; calcium-binding domain maps to D1028–M1070. Residues D1071 to E1112 form the EGF-like 14; calcium-binding domain. Residues D1113–V1154 enclose the EGF-like 15; calcium-binding domain. Residues D1155–A1195 enclose the EGF-like 16; calcium-binding domain. In terms of domain architecture, EGF-like 17 spans D1196–V1237. The EGF-like 18; calcium-binding domain occupies D1238–S1279. The region spanning D1280–H1320 is the EGF-like 19; calcium-binding domain. The EGF-like 20; calcium-binding domain maps to D1321–E1361. Residues D1362–Q1403 form the EGF-like 21; calcium-binding domain. Residues D1404–T1444 enclose the EGF-like 22; calcium-binding domain. A glycan (N-linked (GlcNAc...) asparagine) is linked at N1442. In terms of domain architecture, EGF-like 23; calcium-binding spans D1445–V1485. Residues G1490–C1546 enclose the TB 6 domain. Residue N1538 is glycosylated (N-linked (GlcNAc...) asparagine). In terms of domain architecture, EGF-like 24; calcium-binding spans D1563 to E1604. Cystine bridges form between C1567/C1579, C1574/C1588, C1590/C1603, C1609/C1621, C1616/C1630, and C1632/C1645. The region spanning D1605–M1646 is the EGF-like 25; calcium-binding domain. The N-linked (GlcNAc...) asparagine glycan is linked to N1627. A TB 7 domain is found at S1651–C1703. N1658 and N1668 each carry an N-linked (GlcNAc...) asparagine glycan. Residues D1721 to E1762 enclose the EGF-like 26; calcium-binding domain. Intrachain disulfides connect C1725–C1737, C1732–C1746, C1748–C1761, C1767–C1780, C1774–C1789, C1791–C1803, C1809–C1821, C1816–C1830, C1832–C1845, C1851–C1861, C1856–C1870, C1872–C1884, C1890–C1903, C1898–C1912, C1914–C1927, C1933–C1945, C1940–C1954, C1956–C1967, C1973–C1985, C1980–C1994, and C1996–C2009. The EGF-like 27; calcium-binding domain maps to D1763–V1804. The EGF-like 28 domain occupies G1805 to M1846. Positions D1847–V1885 constitute an EGF-like 29; calcium-binding domain. N1858 carries N-linked (GlcNAc...) asparagine glycosylation. In terms of domain architecture, EGF-like 30; calcium-binding spans D1886–V1928. The region spanning D1929–I1968 is the EGF-like 31; calcium-binding domain. The EGF-like 32; calcium-binding domain occupies D1969 to F2010. Positions S2015 to C2068 constitute a TB 8 domain. N-linked (GlcNAc...) asparagine glycosylation is present at N2033. One can recognise an EGF-like 33; calcium-binding domain in the interval D2084–V2125. Cystine bridges form between C2088-C2100, C2095-C2109, C2111-C2124, C2130-C2141, C2136-C2150, C2152-C2164, C2170-C2181, C2177-C2190, C2192-C2205, C2211-C2225, C2218-C2234, C2236-C2250, C2256-C2268, C2263-C2277, and C2279-C2292. An EGF-like 34; calcium-binding domain is found at D2126–E2165. Residues D2166 to R2206 enclose the EGF-like 35; calcium-binding domain. Residues D2207 to T2251 enclose the EGF-like 36; calcium-binding domain. An EGF-like 37; calcium-binding domain is found at D2252–H2293. Residues G2298 to C2351 enclose the TB 9 domain. Residues D2363 to L2404 form the EGF-like 38; calcium-binding domain. Intrachain disulfides connect C2367/C2379, C2374/C2388, C2390/C2403, C2409/C2420, C2416/C2429, C2431/C2444, C2450/C2461, C2457/C2470, C2472/C2483, C2489/C2502, C2496/C2511, C2513/C2526, C2532/C2542, C2538/C2551, C2553/C2566, C2572/C2584, C2579/C2593, C2595/C2608, C2614/C2625, C2621/C2634, and C2636/C2648. The 41-residue stretch at D2405–K2445 folds into the EGF-like 39; calcium-binding domain. Residues D2446–F2484 form the EGF-like 40; calcium-binding domain. The EGF-like 41; calcium-binding domain maps to D2485 to E2527. The EGF-like 42; calcium-binding domain maps to D2528–V2567. Residues D2568–Q2609 form the EGF-like 43; calcium-binding domain. Residues E2610–V2649 form the EGF-like 44; calcium-binding domain. N-linked (GlcNAc...) asparagine glycosylation is present at N2713.

It belongs to the fibrillin family. Probably forms intermolecular disulfide bonds either with other FBN3 molecules or with other components of the microfibrils. As to expression, predominantly expressed in connective tissues such as skeletal muscle, tendon, skin, perichondrium and periosteum. Highly expressed in fetal lung, brain, kidney. Expressed at low level in prostate, testis, mammary gland, uterus, ovary, placenta, bladder, adrenal gland, thyroid, fetal thymus, fetal liver, liver, fetal heart and heart.

It localises to the secreted. Its subcellular location is the extracellular space. It is found in the extracellular matrix. Functionally, fibrillins are structural components of 10-12 nm extracellular calcium-binding microfibrils, which occur either in association with elastin or in elastin-free bundles. Fibrillin-containing microfibrils provide long-term force bearing structural support. This chain is Fibrillin-3 (FBN3), found in Homo sapiens (Human).